Consider the following 116-residue polypeptide: Large ribosomal subunit protein bL20c (116 aa).

It belongs to the bacterial ribosomal protein bL20 family.

It is found in the plastid. The protein resides in the chloroplast. Its function is as follows. Binds directly to 23S ribosomal RNA and is necessary for the in vitro assembly process of the 50S ribosomal subunit. It is not involved in the protein synthesizing functions of that subunit. The chain is Large ribosomal subunit protein bL20c from Ipomoea purpurea (Common morning glory).